A 1183-amino-acid chain; its full sequence is LRR receptor-like serine/threonine-protein kinase FLS2 (1183 aa).

A signal peptide spans 1–41 (MERNKFASKMSQHYTKTICIAVVLVAVLFSLSSAAAAGSGA). Over 42–809 (AVSVQLEALL…GKKRVFSRTG (768 aa)) the chain is Extracellular. The cysteines at positions 87 and 94 are disulfide-linked. Asn-88 and Asn-120 each carry an N-linked (GlcNAc...) asparagine glycan. LRR repeat units follow at residues 97-120 (AGQV…FLGN), 121-145 (ISTL…LGRL), 147-169 (ELEQ…LCNC), 171-193 (AMWA…IGDL), 194-217 (SNLE…MAKL), 218-241 (KGIM…IGDL), 242-265 (SNLQ…LGRC), 267-289 (NLTL…LGEL), 290-313 (TNLE…LRRC), 315-337 (SLLN…LGEL), 338-361 (PSLQ…LTNL), 363-385 (NLTI…IGSL), and 386-409 (RNLR…ISNC). A disulfide bridge links Cys-167 with Cys-189. N-linked (GlcNAc...) asparagine glycosylation is found at Asn-168 and Asn-181. The N-linked (GlcNAc...) asparagine glycan is linked to Asn-267. N-linked (GlcNAc...) asparagine glycans are attached at residues Asn-363, Asn-395, Asn-408, and Asn-414. 14 LRR repeats span residues 433-457 (LQSL…LFDC), 459-480 (QLQK…LVGQ), 481-505 (LGNL…IGNM), 507-529 (KLIS…ISNM), 530-553 (SSLQ…VFEL), 555-577 (QLTI…VANL), 578-600 (RSLS…ALGR), 601-625 (LDQL…VIAS), 627-651 (SNVQ…IGGL), 652-675 (VMVQ…LAGC), 676-699 (KNLY…LFPQ), 701-724 (DLLT…IAAL), 725-748 (KHIQ…LANL), and 749-773 (TALR…VFRN). 3 N-linked (GlcNAc...) asparagine glycosylation sites follow: Asn-483, Asn-504, and Asn-528. N-linked (GlcNAc...) asparagine glycosylation is present at Asn-591. An N-linked (GlcNAc...) asparagine glycan is attached at Asn-634. Residues Asn-707, Asn-747, Asn-755, and Asn-773 are each glycosylated (N-linked (GlcNAc...) asparagine). A helical transmembrane segment spans residues 810–830 (LVILVVLIALSTLLLLMVATI). Over 831 to 1183 (LLVSYRRYRR…LKMSKLVGED (353 aa)) the chain is Cytoplasmic. The region spanning 876–1179 (FDQGNVIGSS…LSSLLKMSKL (304 aa)) is the Protein kinase domain. Residues 882 to 890 (IGSSNLSTV) and Lys-908 each bind ATP. Asp-1013 serves as the catalytic Proton acceptor.

Belongs to the protein kinase superfamily. Ser/Thr protein kinase family. Interacts with SERK2.

It is found in the cell membrane. It carries out the reaction L-seryl-[protein] + ATP = O-phospho-L-seryl-[protein] + ADP + H(+). The catalysed reaction is L-threonyl-[protein] + ATP = O-phospho-L-threonyl-[protein] + ADP + H(+). In terms of biological role, constitutes the pattern-recognition receptor (PPR) that determines the specific perception of flagellin (flg22), a potent elicitor of the defense response to pathogen-associated molecular patterns (PAMPs). Recognizes flg22 from Pseudomonas aeruginosa and Acidovorax avenae. flg22 is a peptide derived from the bacterial flagellin N-terminus sequence. Does not recognize flg22 from Xanthomonas oryzae pv. oryzae (Xoo) or Xanthomonas oryzae pv. oryzicola (Xoc). The chain is LRR receptor-like serine/threonine-protein kinase FLS2 from Oryza sativa subsp. japonica (Rice).